We begin with the raw amino-acid sequence, 248 residues long: ATP synthase subunit a, chloroplastic (248 aa).

The next 5 helical transmembrane spans lie at 38–58 (QVLL…TIAV), 96–116 (VPFI…GALL), 135–155 (INTT…AGLT), 200–220 (LVVA…VMFL), and 221–241 (GLFT…AYIG).

Belongs to the ATPase A chain family. As to quaternary structure, F-type ATPases have 2 components, CF(1) - the catalytic core - and CF(0) - the membrane proton channel. CF(1) has five subunits: alpha(3), beta(3), gamma(1), delta(1), epsilon(1). CF(0) has four main subunits: a, b, b' and c.

It localises to the plastid. The protein localises to the chloroplast thylakoid membrane. Functionally, key component of the proton channel; it plays a direct role in the translocation of protons across the membrane. This chain is ATP synthase subunit a, chloroplastic, found in Pinus thunbergii (Japanese black pine).